A 258-amino-acid chain; its full sequence is 4-hydroxy-tetrahydrodipicolinate reductase (258 aa).

NAD(+)-binding positions include 8 to 13 (GVTGRM), 93 to 95 (GTT), and 117 to 120 (AANF). The active-site Proton donor/acceptor is H149. Position 150 (H150) interacts with (S)-2,3,4,5-tetrahydrodipicolinate. K153 (proton donor) is an active-site residue. 159–160 (GT) serves as a coordination point for (S)-2,3,4,5-tetrahydrodipicolinate.

It belongs to the DapB family.

The protein localises to the cytoplasm. The enzyme catalyses (S)-2,3,4,5-tetrahydrodipicolinate + NAD(+) + H2O = (2S,4S)-4-hydroxy-2,3,4,5-tetrahydrodipicolinate + NADH + H(+). The catalysed reaction is (S)-2,3,4,5-tetrahydrodipicolinate + NADP(+) + H2O = (2S,4S)-4-hydroxy-2,3,4,5-tetrahydrodipicolinate + NADPH + H(+). It participates in amino-acid biosynthesis; L-lysine biosynthesis via DAP pathway; (S)-tetrahydrodipicolinate from L-aspartate: step 4/4. Its function is as follows. Catalyzes the conversion of 4-hydroxy-tetrahydrodipicolinate (HTPA) to tetrahydrodipicolinate. This Thermomicrobium roseum (strain ATCC 27502 / DSM 5159 / P-2) protein is 4-hydroxy-tetrahydrodipicolinate reductase.